Here is a 329-residue protein sequence, read N- to C-terminus: Glycerol-3-phosphate dehydrogenase [NAD(P)+] (329 aa).

Positions 13, 14, 34, and 105 each coordinate NADPH. Positions 105, 134, and 136 each coordinate sn-glycerol 3-phosphate. Position 138 (Ala-138) interacts with NADPH. Lys-189, Asp-242, Ser-252, Arg-253, and Asn-254 together coordinate sn-glycerol 3-phosphate. Lys-189 acts as the Proton acceptor in catalysis. Residue Arg-253 participates in NADPH binding. The NADPH site is built by Val-277 and Glu-279.

The protein belongs to the NAD-dependent glycerol-3-phosphate dehydrogenase family.

Its subcellular location is the cytoplasm. It catalyses the reaction sn-glycerol 3-phosphate + NAD(+) = dihydroxyacetone phosphate + NADH + H(+). The enzyme catalyses sn-glycerol 3-phosphate + NADP(+) = dihydroxyacetone phosphate + NADPH + H(+). Its pathway is membrane lipid metabolism; glycerophospholipid metabolism. Catalyzes the reduction of the glycolytic intermediate dihydroxyacetone phosphate (DHAP) to sn-glycerol 3-phosphate (G3P), the key precursor for phospholipid synthesis. The polypeptide is Glycerol-3-phosphate dehydrogenase [NAD(P)+] (Legionella pneumophila (strain Lens)).